A 389-amino-acid polypeptide reads, in one-letter code: S-adenosylmethionine synthase (389 aa).

His-15 lines the ATP pocket. A Mg(2+)-binding site is contributed by Asp-17. Glu-43 serves as a coordination point for K(+). L-methionine-binding residues include Glu-56 and Gln-99. A flexible loop region spans residues 99 to 109 (QSPDIAQGVNE). ATP-binding positions include 166-168 (DAK), 234-235 (RF), Asp-243, 249-250 (RK), Ala-266, and Lys-270. Asp-243 contacts L-methionine. Lys-274 is an L-methionine binding site.

The protein belongs to the AdoMet synthase family. Homotetramer; dimer of dimers. Requires Mg(2+) as cofactor. The cofactor is K(+).

The protein resides in the cytoplasm. The enzyme catalyses L-methionine + ATP + H2O = S-adenosyl-L-methionine + phosphate + diphosphate. It functions in the pathway amino-acid biosynthesis; S-adenosyl-L-methionine biosynthesis; S-adenosyl-L-methionine from L-methionine: step 1/1. In terms of biological role, catalyzes the formation of S-adenosylmethionine (AdoMet) from methionine and ATP. The overall synthetic reaction is composed of two sequential steps, AdoMet formation and the subsequent tripolyphosphate hydrolysis which occurs prior to release of AdoMet from the enzyme. This Neisseria meningitidis serogroup A / serotype 4A (strain DSM 15465 / Z2491) protein is S-adenosylmethionine synthase.